The chain runs to 338 residues: Ketol-acid reductoisomerase (NADP(+)) (338 aa).

The 181-residue stretch at 1 to 181 (MKVFYDNDAD…GGTRAGVIET (181 aa)) folds into the KARI N-terminal Rossmann domain. NADP(+)-binding positions include 24-27 (YGSQ), Arg47, Ser50, Ser52, and 82-85 (DEGQ). The active site involves His107. Gly133 provides a ligand contact to NADP(+). A KARI C-terminal knotted domain is found at 182-327 (SFREETETDL…SKLRSMMTWI (146 aa)). The Mg(2+) site is built by Asp190, Glu194, Glu226, and Glu230. Ser251 serves as a coordination point for substrate.

Belongs to the ketol-acid reductoisomerase family. Mg(2+) is required as a cofactor.

It carries out the reaction (2R)-2,3-dihydroxy-3-methylbutanoate + NADP(+) = (2S)-2-acetolactate + NADPH + H(+). The enzyme catalyses (2R,3R)-2,3-dihydroxy-3-methylpentanoate + NADP(+) = (S)-2-ethyl-2-hydroxy-3-oxobutanoate + NADPH + H(+). It participates in amino-acid biosynthesis; L-isoleucine biosynthesis; L-isoleucine from 2-oxobutanoate: step 2/4. Its pathway is amino-acid biosynthesis; L-valine biosynthesis; L-valine from pyruvate: step 2/4. Involved in the biosynthesis of branched-chain amino acids (BCAA). Catalyzes an alkyl-migration followed by a ketol-acid reduction of (S)-2-acetolactate (S2AL) to yield (R)-2,3-dihydroxy-isovalerate. In the isomerase reaction, S2AL is rearranged via a Mg-dependent methyl migration to produce 3-hydroxy-3-methyl-2-ketobutyrate (HMKB). In the reductase reaction, this 2-ketoacid undergoes a metal-dependent reduction by NADPH to yield (R)-2,3-dihydroxy-isovalerate. The chain is Ketol-acid reductoisomerase (NADP(+)) from Acidithiobacillus ferrooxidans (strain ATCC 23270 / DSM 14882 / CIP 104768 / NCIMB 8455) (Ferrobacillus ferrooxidans (strain ATCC 23270)).